The chain runs to 524 residues: Cytochrome P450 6k1 (524 aa).

A heme-binding site is contributed by Cys-464.

This sequence belongs to the cytochrome P450 family. It depends on heme as a cofactor.

The protein resides in the endoplasmic reticulum membrane. It localises to the microsome membrane. The polypeptide is Cytochrome P450 6k1 (CYP6K1) (Blattella germanica (German cockroach)).